We begin with the raw amino-acid sequence, 131 residues long: Nitrogenase-stabilizing/protective protein NifW (131 aa).

This sequence belongs to the NifW family. Homotrimer; associates with NifD.

In terms of biological role, may protect the nitrogenase Fe-Mo protein from oxidative damage. This is Nitrogenase-stabilizing/protective protein NifW from Frankia alni (strain DSM 45986 / CECT 9034 / ACN14a).